Consider the following 360-residue polypeptide: GDSL esterase/lipase At2g31540 (360 aa).

The N-terminal stretch at 1–23 is a signal peptide; sequence MSTSKAITLTLFIATTLLAPCNA. Ser42 functions as the Nucleophile in the catalytic mechanism. 2 N-linked (GlcNAc...) asparagine glycosylation sites follow: Asn104 and Asn326. Residues Asp334 and His337 contribute to the active site.

Belongs to the 'GDSL' lipolytic enzyme family.

The protein localises to the secreted. The chain is GDSL esterase/lipase At2g31540 from Arabidopsis thaliana (Mouse-ear cress).